The following is a 97-amino-acid chain: Aspartyl/glutamyl-tRNA(Asn/Gln) amidotransferase subunit C (97 aa).

The protein belongs to the GatC family. Heterotrimer of A, B and C subunits.

The catalysed reaction is L-glutamyl-tRNA(Gln) + L-glutamine + ATP + H2O = L-glutaminyl-tRNA(Gln) + L-glutamate + ADP + phosphate + H(+). It carries out the reaction L-aspartyl-tRNA(Asn) + L-glutamine + ATP + H2O = L-asparaginyl-tRNA(Asn) + L-glutamate + ADP + phosphate + 2 H(+). Allows the formation of correctly charged Asn-tRNA(Asn) or Gln-tRNA(Gln) through the transamidation of misacylated Asp-tRNA(Asn) or Glu-tRNA(Gln) in organisms which lack either or both of asparaginyl-tRNA or glutaminyl-tRNA synthetases. The reaction takes place in the presence of glutamine and ATP through an activated phospho-Asp-tRNA(Asn) or phospho-Glu-tRNA(Gln). In Sulfolobus acidocaldarius (strain ATCC 33909 / DSM 639 / JCM 8929 / NBRC 15157 / NCIMB 11770), this protein is Aspartyl/glutamyl-tRNA(Asn/Gln) amidotransferase subunit C.